The chain runs to 420 residues: ATP phosphoribosyltransferase regulatory subunit (420 aa).

This sequence belongs to the class-II aminoacyl-tRNA synthetase family. HisZ subfamily. Heteromultimer composed of HisG and HisZ subunits.

Its subcellular location is the cytoplasm. The protein operates within amino-acid biosynthesis; L-histidine biosynthesis; L-histidine from 5-phospho-alpha-D-ribose 1-diphosphate: step 1/9. Required for the first step of histidine biosynthesis. May allow the feedback regulation of ATP phosphoribosyltransferase activity by histidine. The polypeptide is ATP phosphoribosyltransferase regulatory subunit (Bacillus thuringiensis subsp. konkukian (strain 97-27)).